The following is a 57-amino-acid chain: MAFTASDICKIIVAVILPPLGVFFERGCGADLFINILLTILGYLPGIVHALYIILKY.

A helical membrane pass occupies residues 34 to 54 (INILLTILGYLPGIVHALYII).

The protein belongs to the UPF0057 (PMP3) family.

It localises to the cell membrane. Its function is as follows. Plays a role in the regulation of membrane potential. Could mediate a proton leak. This chain is Plasma membrane proteolipid 3 (pmp-1), found in Neurospora crassa (strain ATCC 24698 / 74-OR23-1A / CBS 708.71 / DSM 1257 / FGSC 987).